A 968-amino-acid polypeptide reads, in one-letter code: RNA polymerase-associated protein RapA (968 aa).

Residues 164–334 (DVGRRHAPRV…FARLRLLDPN (171 aa)) enclose the Helicase ATP-binding domain. 177–184 (DEVGLGKT) lines the ATP pocket. The DEAH box signature appears at 280 to 283 (DEAH). One can recognise a Helicase C-terminal domain in the interval 490–662 (RVEWLMGYLT…YLASPVQTEG (173 aa)).

This sequence belongs to the SNF2/RAD54 helicase family. RapA subfamily. As to quaternary structure, interacts with the RNAP. Has a higher affinity for the core RNAP than for the holoenzyme. Its ATPase activity is stimulated by binding to RNAP.

Functionally, transcription regulator that activates transcription by stimulating RNA polymerase (RNAP) recycling in case of stress conditions such as supercoiled DNA or high salt concentrations. Probably acts by releasing the RNAP, when it is trapped or immobilized on tightly supercoiled DNA. Does not activate transcription on linear DNA. Probably not involved in DNA repair. This is RNA polymerase-associated protein RapA from Shigella sonnei (strain Ss046).